The primary structure comprises 627 residues: 1-deoxy-D-xylulose-5-phosphate synthase (627 aa).

Residues H74 and 115–117 (GHA) contribute to the thiamine diphosphate site. D146 lines the Mg(2+) pocket. Residues 147–148 (AA), N175, F284, and E364 each bind thiamine diphosphate. Mg(2+) is bound at residue N175.

Belongs to the transketolase family. DXPS subfamily. Homodimer. The cofactor is Mg(2+). Requires thiamine diphosphate as cofactor.

It carries out the reaction D-glyceraldehyde 3-phosphate + pyruvate + H(+) = 1-deoxy-D-xylulose 5-phosphate + CO2. It functions in the pathway metabolic intermediate biosynthesis; 1-deoxy-D-xylulose 5-phosphate biosynthesis; 1-deoxy-D-xylulose 5-phosphate from D-glyceraldehyde 3-phosphate and pyruvate: step 1/1. Functionally, catalyzes the acyloin condensation reaction between C atoms 2 and 3 of pyruvate and glyceraldehyde 3-phosphate to yield 1-deoxy-D-xylulose-5-phosphate (DXP). This Acidobacterium capsulatum (strain ATCC 51196 / DSM 11244 / BCRC 80197 / JCM 7670 / NBRC 15755 / NCIMB 13165 / 161) protein is 1-deoxy-D-xylulose-5-phosphate synthase.